The primary structure comprises 152 residues: MSTINTDTNETMPHVSVNAQYIKDLSLENPSAPSSLAALDQRPQIDLSLDINITNLSEENFYEVELNIEAIARNEKYKLFQIELKYAGVFNLINIDSEQHPVLLSVHCPAMIFPFARKIIASCTQDAGFQPLMIDPIDFGALYHKKMSEHQN.

This sequence belongs to the SecB family. In terms of assembly, homotetramer, a dimer of dimers. One homotetramer interacts with 1 SecA dimer.

Its subcellular location is the cytoplasm. Its function is as follows. One of the proteins required for the normal export of preproteins out of the cell cytoplasm. It is a molecular chaperone that binds to a subset of precursor proteins, maintaining them in a translocation-competent state. It also specifically binds to its receptor SecA. The protein is Protein-export protein SecB of Rickettsia africae (strain ESF-5).